The sequence spans 222 residues: UPF0758 protein HSM_0009 (222 aa).

Positions 99 to 222 (QEFTSPDTVR…YFSFAEQGWI (124 aa)) constitute an MPN domain. The Zn(2+) site is built by His171, His173, and Asp184. The JAMM motif motif lies at 171–184 (HNHPSGVSTPSMAD).

Belongs to the UPF0758 family.

The protein is UPF0758 protein HSM_0009 of Histophilus somni (strain 2336) (Haemophilus somnus).